A 578-amino-acid polypeptide reads, in one-letter code: Arginine--tRNA ligase (578 aa).

The short motif at 125 to 135 (PNVAKKMHVGH) is the 'HIGH' region element.

Belongs to the class-I aminoacyl-tRNA synthetase family. In terms of assembly, monomer.

It localises to the cytoplasm. It carries out the reaction tRNA(Arg) + L-arginine + ATP = L-arginyl-tRNA(Arg) + AMP + diphosphate. This chain is Arginine--tRNA ligase, found in Buchnera aphidicola subsp. Baizongia pistaciae (strain Bp).